Here is a 312-residue protein sequence, read N- to C-terminus: Olfactory receptor 2M3 (312 aa).

Residues 1 to 25 (MARENSTFNSDFILLGIFNHSPTHT) lie on the Extracellular side of the membrane. N-linked (GlcNAc...) asparagine glycosylation is present at asparagine 5. Residues 26 to 49 (FLFFLVLAIFSVAFMGNSVMVLLI) traverse the membrane as a helical segment. Over 50-57 (YLDTQLHT) the chain is Cytoplasmic. The helical transmembrane segment at 58–79 (PMYLLLSQLSLMDLMLICTTVP) threads the bilayer. Residues 80–100 (KMAFNYLSGSKSISMAGCATQ) are Extracellular-facing. A disulfide bond links cysteine 97 and cysteine 189. A helical transmembrane segment spans residues 101–120 (IFFYTSLLGSECFLLAVMAY). At 121-139 (DRYTAICHPLRYTNLMSPK) the chain is on the cytoplasmic side. The chain crosses the membrane as a helical span at residues 140–158 (ICGLMTAFSWILGSTDGII). Over 159 to 195 (DVVATFSFSYCGSREIAHFFCDFPSLLILSCSDTSIF) the chain is Extracellular. The chain crosses the membrane as a helical span at residues 196-219 (EKILFICCIVMIVFPVAIIIASYA). Topologically, residues 220 to 236 (RVILAVIHMGSGEGRRK) are cytoplasmic. Residues 237–259 (AFTTCSSHLLVVGMYYGAALFMY) traverse the membrane as a helical segment. Topologically, residues 260 to 272 (IRPTSDRSPTQDK) are extracellular. A helical transmembrane segment spans residues 273–292 (MVSVFYTILTPMLNPLIYSL). The Cytoplasmic segment spans residues 293 to 312 (RNKEVTRAFMKILGKGKSGE).

The protein belongs to the G-protein coupled receptor 1 family.

Its subcellular location is the cell membrane. Its function is as follows. Odorant receptor. In Homo sapiens (Human), this protein is Olfactory receptor 2M3 (OR2M3).